A 286-amino-acid polypeptide reads, in one-letter code: UPF0725 protein At2g20620 (286 aa).

The interval 1–49 is disordered; sequence MVLETPVCSPIDKESSSDDVQLNKPPKKKRKLDVVYPPRDNTSSSSDVK.

The protein belongs to the UPF0725 (EMB2204) family.

This Arabidopsis thaliana (Mouse-ear cress) protein is UPF0725 protein At2g20620.